A 156-amino-acid chain; its full sequence is Arginine repressor (156 aa).

Belongs to the ArgR family.

The protein localises to the cytoplasm. It participates in amino-acid biosynthesis; L-arginine biosynthesis [regulation]. Its function is as follows. Regulates arginine biosynthesis genes. The protein is Arginine repressor of Photobacterium profundum (strain SS9).